The primary structure comprises 469 residues: Putative pyridoxal-dependent decarboxylase domain-containing protein 2 (469 aa).

Residues 12 to 40 (TLAEMGKNLKEAVKMLEDSQRRTEEENGK) are a coiled coil. Basic and acidic residues predominate over residues 28 to 44 (EDSQRRTEEENGKKLIS). The segment at 28–47 (EDSQRRTEEENGKKLISRDI) is disordered.

Belongs to the group II decarboxylase family. Requires pyridoxal 5'-phosphate as cofactor.

The protein is Putative pyridoxal-dependent decarboxylase domain-containing protein 2 (PDXDC2P) of Homo sapiens (Human).